The chain runs to 113 residues: T cell receptor alpha variable 13-2 (113 aa).

An N-terminal signal peptide occupies residues 1 to 21 (MAGIRALFMYLWLQLDWVSRG). The region spanning 22 to 113 (ESVGLHLPTL…DSAVYFCAEN (92 aa)) is the Ig-like domain. Cysteine 43 and cysteine 110 are oxidised to a cystine. Asparagine 87 is a glycosylation site (N-linked (GlcNAc...) asparagine).

As to quaternary structure, alpha-beta TR is a heterodimer composed of an alpha and beta chain; disulfide-linked. The alpha-beta TR is associated with the transmembrane signaling CD3 coreceptor proteins to form the TR-CD3 (TcR or TCR). The assembly of alpha-beta TR heterodimers with CD3 occurs in the endoplasmic reticulum where a single alpha-beta TR heterodimer associates with one CD3D-CD3E heterodimer, one CD3G-CD3E heterodimer and one CD247 homodimer forming a stable octameric structure. CD3D-CD3E and CD3G-CD3E heterodimers preferentially associate with TR alpha and TR beta chains, respectively. The association of the CD247 homodimer is the last step of TcR assembly in the endoplasmic reticulum and is required for transport to the cell surface.

It is found in the cell membrane. In terms of biological role, v region of the variable domain of T cell receptor (TR) alpha chain that participates in the antigen recognition. Alpha-beta T cell receptors are antigen specific receptors which are essential to the immune response and are present on the cell surface of T lymphocytes. Recognize peptide-major histocompatibility (MH) (pMH) complexes that are displayed by antigen presenting cells (APC), a prerequisite for efficient T cell adaptive immunity against pathogens. Binding of alpha-beta TR to pMH complex initiates TR-CD3 clustering on the cell surface and intracellular activation of LCK that phosphorylates the ITAM motifs of CD3G, CD3D, CD3E and CD247 enabling the recruitment of ZAP70. In turn ZAP70 phosphorylates LAT, which recruits numerous signaling molecules to form the LAT signalosome. The LAT signalosome propagates signal branching to three major signaling pathways, the calcium, the mitogen-activated protein kinase (MAPK) kinase and the nuclear factor NF-kappa-B (NF-kB) pathways, leading to the mobilization of transcription factors that are critical for gene expression and essential for T cell growth and differentiation. The T cell repertoire is generated in the thymus, by V-(D)-J rearrangement. This repertoire is then shaped by intrathymic selection events to generate a peripheral T cell pool of self-MH restricted, non-autoaggressive T cells. Post-thymic interaction of alpha-beta TR with the pMH complexes shapes TR structural and functional avidity. This is T cell receptor alpha variable 13-2 from Homo sapiens (Human).